Here is a 209-residue protein sequence, read N- to C-terminus: Neurotrophin-4 (209 aa).

A signal peptide spans 1–21 (MLPRHSCSLLLFLLLLPSVPM). The propeptide occupies 22-79 (EPQPPSSTLPPFLAPEWDLLSPRVALSRGTPAGPPLLFLLEAGAYGEPAGAPANRSRR). N-linked (GlcNAc...) asparagine glycosylation is present at Asn75. 3 disulfide bridges follow: Cys96–Cys169, Cys140–Cys198, and Cys157–Cys200.

The protein belongs to the NGF-beta family. In terms of tissue distribution, expressed in thymus, muscle, ovary, brain, heart, stomach and kidney. Expressed in both embryo and adult tissues.

Its subcellular location is the secreted. Functionally, target-derived survival factor for peripheral sensory sympathetic neurons. May promote ameloblast differentiation and subsequent reduction in proliferation of ameloblasts. The chain is Neurotrophin-4 (Ntf4) from Rattus norvegicus (Rat).